The sequence spans 311 residues: GTP cyclohydrolase FolE2 (311 aa).

It belongs to the GTP cyclohydrolase IV family.

It carries out the reaction GTP + H2O = 7,8-dihydroneopterin 3'-triphosphate + formate + H(+). The protein operates within cofactor biosynthesis; 7,8-dihydroneopterin triphosphate biosynthesis; 7,8-dihydroneopterin triphosphate from GTP: step 1/1. Its function is as follows. Converts GTP to 7,8-dihydroneopterin triphosphate. The protein is GTP cyclohydrolase FolE2 of Xanthomonas campestris pv. campestris (strain 8004).